The chain runs to 191 residues: Large ribosomal subunit protein bL9 (191 aa).

The segment at 151-191 (AERQAKGESLTSADAIYGVDEDALKPEDFFNPEAEIESEEE) is disordered.

Belongs to the bacterial ribosomal protein bL9 family.

Its function is as follows. Binds to the 23S rRNA. The chain is Large ribosomal subunit protein bL9 from Sinorhizobium medicae (strain WSM419) (Ensifer medicae).